The primary structure comprises 543 residues: Carboxypeptidase Y homolog A (543 aa).

An N-terminal signal peptide occupies residues 1–17; that stretch reads MRVAASALLAGAASAAV. A propeptide spanning residues 18-128 is cleaved from the precursor; sequence APQQQILKFP…KLEQFDLRVK (111 aa). 5 disulfide bridges follow: cysteine 182/cysteine 421, cysteine 316/cysteine 330, cysteine 340/cysteine 363, cysteine 347/cysteine 356, and cysteine 385/cysteine 391. A glycan (N-linked (GlcNAc...) asparagine) is linked at asparagine 213. The active site involves serine 269. Residue aspartate 460 is part of the active site. Asparagine 508 carries an N-linked (GlcNAc...) asparagine glycan. The active site involves histidine 519.

The protein belongs to the peptidase S10 family.

Its subcellular location is the vacuole. It carries out the reaction Release of a C-terminal amino acid with broad specificity.. Functionally, vacuolar carboxypeptidase involved in degradation of small peptides. Digests preferentially peptides containing an aliphatic or hydrophobic residue in P1' position, as well as methionine, leucine or phenylalanine in P1 position of ester substrate. The sequence is that of Carboxypeptidase Y homolog A (CPYA) from Phaeosphaeria nodorum (strain SN15 / ATCC MYA-4574 / FGSC 10173) (Glume blotch fungus).